Here is a 186-residue protein sequence, read N- to C-terminus: C-type lectin domain family 19 member A (186 aa).

The N-terminal stretch at 1 to 19 (MQRWTLWAAAFLTLHSAQA) is a signal peptide. Positions 47–179 (FKGHCYRFFP…CSRKFPFVCK (133 aa)) constitute a C-type lectin domain. N-linked (GlcNAc...) asparagine glycosylation occurs at N58. Disulfide bonds link C68/C178 and C151/C170.

It localises to the secreted. This is C-type lectin domain family 19 member A from Homo sapiens (Human).